A 316-amino-acid polypeptide reads, in one-letter code: FAD:protein FMN transferase (316 aa).

FAD-binding positions include Met-14, 88-90 (AFN), and Asp-146. Position 149 (Ala-149) interacts with Mg(2+). Lys-152 and Leu-231 together coordinate FAD. Residues Asp-257 and Thr-261 each contribute to the Mg(2+) site.

The protein belongs to the ApbE family. It depends on Mg(2+) as a cofactor.

It is found in the cytoplasm. It carries out the reaction L-threonyl-[protein] + FAD = FMN-L-threonyl-[protein] + AMP + H(+). Functionally, flavin transferase that catalyzes the transfer of the FMN moiety of FAD and its covalent binding to the hydroxyl group of a threonine residue in a target flavoprotein. Is responsible for the modification of the fumarate reductase KPK_2907. The chain is FAD:protein FMN transferase from Klebsiella pneumoniae (strain 342).